We begin with the raw amino-acid sequence, 565 residues long: Phosphomethylpyrimidine synthase (565 aa).

Residues Asn203, Met232, Tyr261, His297, Ser317–Gly319, Asp358–Arg361, and Glu397 each bind substrate. His401 is a Zn(2+) binding site. Substrate is bound at residue Tyr424. His465 is a binding site for Zn(2+). Positions 541, 544, and 549 each coordinate [4Fe-4S] cluster.

Belongs to the ThiC family. It depends on [4Fe-4S] cluster as a cofactor.

The catalysed reaction is 5-amino-1-(5-phospho-beta-D-ribosyl)imidazole + S-adenosyl-L-methionine = 4-amino-2-methyl-5-(phosphooxymethyl)pyrimidine + CO + 5'-deoxyadenosine + formate + L-methionine + 3 H(+). It functions in the pathway cofactor biosynthesis; thiamine diphosphate biosynthesis. Its function is as follows. Catalyzes the synthesis of the hydroxymethylpyrimidine phosphate (HMP-P) moiety of thiamine from aminoimidazole ribotide (AIR) in a radical S-adenosyl-L-methionine (SAM)-dependent reaction. The polypeptide is Phosphomethylpyrimidine synthase (Bacteroides thetaiotaomicron (strain ATCC 29148 / DSM 2079 / JCM 5827 / CCUG 10774 / NCTC 10582 / VPI-5482 / E50)).